The sequence spans 35 residues: Thionin NsW1 (35 aa).

Disulfide bonds link Cys-4–Cys-32, Cys-12–Cys-30, and Cys-16–Cys-26.

In terms of processing, contains 4 disulfide bonds.

Its subcellular location is the secreted. Functionally, antimicrobial peptide disrupting membranes. Has antibacterial against Gram-positive bacteria S.aureus (MIC=6.5 uM) and B.subtilis (MIC=3.25 uM) but not against Gram-negative bacterium E.coli. Has antifungal activity against C.albicans (MIC=1.63 uM). The sequence is that of Thionin NsW1 from Nigella sativa (Black cumin).